The following is a 124-amino-acid chain: Large ribosomal subunit protein uL29 (124 aa).

It belongs to the universal ribosomal protein uL29 family.

This chain is Large ribosomal subunit protein uL29 (RPL35), found in Triticum aestivum (Wheat).